The chain runs to 638 residues: 3D-(3,5/4)-trihydroxycyclohexane-1,2-dione hydrolase (638 aa).

Glu-67 lines the thiamine diphosphate pocket. The interval 442–523 is thiamine pyrophosphate binding; the sequence is SLPGDLQRLW…INIMLFDNSG (82 aa). Asp-494 and Asn-521 together coordinate Mg(2+).

The protein belongs to the TPP enzyme family. Requires Mg(2+) as cofactor. The cofactor is thiamine diphosphate.

It carries out the reaction 3D-3,5/4-trihydroxycyclohexane-1,2-dione + H2O = 5-deoxy-D-glucuronate + H(+). The protein operates within polyol metabolism; myo-inositol degradation into acetyl-CoA; acetyl-CoA from myo-inositol: step 3/7. In terms of biological role, involved in the cleavage of the C1-C2 bond of 3D-(3,5/4)-trihydroxycyclohexane-1,2-dione (THcHDO) to yield 5-deoxy-glucuronate (5DG). The protein is 3D-(3,5/4)-trihydroxycyclohexane-1,2-dione hydrolase of Listeria monocytogenes serotype 4b (strain F2365).